The following is a 543-amino-acid chain: Probable protein kinase UbiB (543 aa).

Positions 123 to 500 (DFDQQPLASA…HRRHAQARFL (378 aa)) constitute a Protein kinase domain. Residues 129–137 (LASASVAQV) and K152 contribute to the ATP site. D286 functions as the Proton acceptor in the catalytic mechanism. 2 consecutive transmembrane segments (helical) span residues 499 to 519 (FLLG…PTHE) and 521 to 541 (LASA…WKIS).

This sequence belongs to the ABC1 family. UbiB subfamily.

It is found in the cell inner membrane. It functions in the pathway cofactor biosynthesis; ubiquinone biosynthesis [regulation]. Its function is as follows. Is probably a protein kinase regulator of UbiI activity which is involved in aerobic coenzyme Q (ubiquinone) biosynthesis. The polypeptide is Probable protein kinase UbiB (Tolumonas auensis (strain DSM 9187 / NBRC 110442 / TA 4)).